The primary structure comprises 69 residues: Large ribosomal subunit protein bL28 (69 aa).

The protein belongs to the bacterial ribosomal protein bL28 family.

In Nitratidesulfovibrio vulgaris (strain DSM 19637 / Miyazaki F) (Desulfovibrio vulgaris), this protein is Large ribosomal subunit protein bL28.